The following is a 1751-amino-acid chain: Non-reducing polyketide synthase afvB (1751 aa).

The interval 19 to 249 (FRRLRLHSKC…PLPVYGGPCH (231 aa)) is N-terminal acylcarrier protein transacylase domain (SAT). The Ketosynthase family 3 (KS3) domain maps to 381–811 (HEKIAVIGMS…GGNTSLLLEE (431 aa)). Catalysis depends on for beta-ketoacyl synthase activity residues cysteine 554, histidine 689, and histidine 730. The segment at 910–1228 (FVFSGQGSFS…SMSALHSAGV (319 aa)) is malonyl-CoA:ACP transacylase (MAT) domain. The segment at 1291–1607 (TALVHHILEE…PRILMSRFFD (317 aa)) is product template (PT) domain. The interval 1295 to 1429 (HHILEESFGK…GVVTCGDSHS (135 aa)) is N-terminal hotdog fold. In terms of domain architecture, PKS/mFAS DH spans 1295-1603 (HHILEESFGK…LRPLPRILMS (309 aa)). Residue histidine 1327 is the Proton acceptor; for dehydratase activity of the active site. A C-terminal hotdog fold region spans residues 1456-1603 (LASRVSKDLV…LRPLPRILMS (148 aa)). Aspartate 1514 serves as the catalytic Proton donor; for dehydratase activity. Residues 1610-1670 (DSQYGQMAQQ…KAPISGSWPN (61 aa)) are disordered. Over residues 1612-1657 (QYGQMAQQEPSTALPSTPQHTSSAKTTESTPSQQDESDNTSLATPE) the composition is skewed to polar residues. The region spanning 1670–1747 (NANSQLVRDA…DLKAYLEGNQ (78 aa)) is the Carrier domain. The residue at position 1707 (serine 1707) is an O-(pantetheine 4'-phosphoryl)serine.

It depends on pantetheine 4'-phosphate as a cofactor. As to expression, expressed mainly in sclerotia, with expression levels 20-fold and 10-fold greater than the expression levels of this gene found in mycelium and conidia, respectively.

Its pathway is secondary metabolite biosynthesis. In terms of biological role, non-reducing polyketide synthase (NRPKS); part of the gene cluster that mediates the biosynthesis of aflavarin, a bicoumarin that exhibits anti-insectan activity against the fungivorous beetle C.hemipterus. Catalyzes the formation of the aromatic polyketide from acetyl coenzyme A and seven malonyl coenzyme A molecules. The chain is Non-reducing polyketide synthase afvB from Aspergillus flavus (strain ATCC 200026 / FGSC A1120 / IAM 13836 / NRRL 3357 / JCM 12722 / SRRC 167).